A 190-amino-acid chain; its full sequence is Small ribosomal subunit protein mS23 (190 aa).

N-acetylalanine is present on Ala2. Lys102 bears the N6-acetyllysine mark. Residues 139–190 (RTQHGGSHVSRKSEHLSVRPQTALEENETQKEVPQDQHLEAPADQSKGLLPP) form a disordered region. A compositionally biased stretch (basic and acidic residues) spans 166 to 179 (ETQKEVPQDQHLEA).

Belongs to the mitochondrion-specific ribosomal protein mS23 family. In terms of assembly, component of the mitochondrial small ribosomal subunit (mt-SSU). Mature mammalian 55S mitochondrial ribosomes consist of a small (28S) and a large (39S) subunit. The 28S small subunit contains a 12S ribosomal RNA (12S mt-rRNA) and 30 different proteins. The 39S large subunit contains a 16S rRNA (16S mt-rRNA), a copy of mitochondrial valine transfer RNA (mt-tRNA(Val)), which plays an integral structural role, and 52 different proteins.

The protein resides in the mitochondrion. The protein is Small ribosomal subunit protein mS23 (MRPS23) of Homo sapiens (Human).